Here is a 376-residue protein sequence, read N- to C-terminus: Phytanoyl-CoA hydroxylase-interacting protein-like (376 aa).

The Fibronectin type-III domain maps to 52-161; sequence VPHNIKISNI…EIIEFCTADY (110 aa).

This sequence belongs to the PHYHIP family.

Functionally, may play a role in the development of the central system. This chain is Phytanoyl-CoA hydroxylase-interacting protein-like (phyhipl), found in Xenopus laevis (African clawed frog).